We begin with the raw amino-acid sequence, 383 residues long: Protein delta homolog 1 (383 aa).

Positions 1–23 (MIATGALLRVLLLLLAFGHSTYG) are cleaved as a signal peptide. EGF-like domains lie at 24-55 (AECD…PLCE), 59-86 (TSPG…KFCE), 88-125 (DIRA…KDCQ), 127-168 (KAGP…NFCE), 170-206 (VTNS…KTCS), and 208-245 (PVSN…PTCA). Topologically, residues 24 to 306 (AECDPACDPQ…PLLTEGQAIC (283 aa)) are extracellular. 17 cysteine pairs are disulfide-bonded: C26/C37, C30/C43, C45/C54, C63/C68, C76/C85, C92/C103, C97/C113, C115/C124, C131/C144, C138/C156, C158/C167, C174/C185, C179/C194, C196/C205, C212/C223, C217/C233, and C235/C244. A helical transmembrane segment spans residues 307 to 327 (FTILGVLTSLVVLGTVAIVFL). Topologically, residues 328–383 (NKCEAWVSNLRYNHMLRKKKNLLLQYNSGEELAVNIIFPEKIDMTTFNKEAGDEDI) are cytoplasmic.

In terms of assembly, monomer. Interacts with SH3RF2. Glycosylated. In terms of tissue distribution, pancreas and adrenal glands (at protein level).

The protein resides in the membrane. The protein localises to the cytoplasm. In terms of biological role, may have a role in neuroendocrine differentiation. Inhibits adipocyte differentiation. This chain is Protein delta homolog 1 (Dlk1), found in Rattus norvegicus (Rat).